Reading from the N-terminus, the 129-residue chain is ATP synthase epsilon chain (129 aa).

This sequence belongs to the ATPase epsilon chain family. In terms of assembly, F-type ATPases have 2 components, CF(1) - the catalytic core - and CF(0) - the membrane proton channel. CF(1) has five subunits: alpha(3), beta(3), gamma(1), delta(1), epsilon(1). CF(0) has three main subunits: a, b and c.

The protein localises to the cell inner membrane. Functionally, produces ATP from ADP in the presence of a proton gradient across the membrane. This Campylobacter jejuni subsp. jejuni serotype O:2 (strain ATCC 700819 / NCTC 11168) protein is ATP synthase epsilon chain.